A 600-amino-acid chain; its full sequence is NADH-quinone oxidoreductase subunit C/D (600 aa).

Positions 1–190 are NADH dehydrogenase I subunit C; sequence MVNNMTDLTA…SPFELTKAKQ (190 aa). An NADH dehydrogenase I subunit D region spans residues 214–600; it reads DFMFLNLGPN…IDFVMSDVDR (387 aa).

In the N-terminal section; belongs to the complex I 30 kDa subunit family. This sequence in the C-terminal section; belongs to the complex I 49 kDa subunit family. In terms of assembly, NDH-1 is composed of 13 different subunits. Subunits NuoB, CD, E, F, and G constitute the peripheral sector of the complex.

It localises to the cell inner membrane. It catalyses the reaction a quinone + NADH + 5 H(+)(in) = a quinol + NAD(+) + 4 H(+)(out). Functionally, NDH-1 shuttles electrons from NADH, via FMN and iron-sulfur (Fe-S) centers, to quinones in the respiratory chain. The immediate electron acceptor for the enzyme in this species is believed to be ubiquinone. Couples the redox reaction to proton translocation (for every two electrons transferred, four hydrogen ions are translocated across the cytoplasmic membrane), and thus conserves the redox energy in a proton gradient. The polypeptide is NADH-quinone oxidoreductase subunit C/D (Escherichia coli O127:H6 (strain E2348/69 / EPEC)).